A 259-amino-acid polypeptide reads, in one-letter code: uncharacterized protein (259 aa).

It belongs to the chlamydial CPn_0128/CT_035/TC_0305 family.

This is an uncharacterized protein from Chlamydia muridarum (strain MoPn / Nigg).